Here is a 447-residue protein sequence, read N- to C-terminus: Elongation factor 1-alpha (447 aa).

The 226-residue stretch at 5 to 230 (KVHINIVVIG…DNINEPKRPS (226 aa)) folds into the tr-type G domain. Positions 14–21 (GHVDSGKS) are G1. A GTP-binding site is contributed by 14–21 (GHVDSGKS). Lys-55 carries the N6,N6-dimethyllysine modification. The tract at residues 70–74 (GITID) is G2. Lys-79 is modified (N6,N6,N6-trimethyllysine). The interval 91 to 94 (DAPG) is G3. Residues 91–95 (DAPGH) and 153–156 (NKMD) each bind GTP. The G4 stretch occupies residues 153–156 (NKMD). Position 187 is an N6,N6,N6-trimethyllysine (Lys-187). The tract at residues 194-196 (SGF) is G5. Lys-261 is modified (N6-methyllysine). 5-glutamyl glycerylphosphorylethanolamine is present on Glu-289. Position 306 is an N6,N6,N6-trimethyllysine (Lys-306). Glu-362 is subject to 5-glutamyl glycerylphosphorylethanolamine. Lys-396 carries the post-translational modification N6,N6,N6-trimethyllysine.

The protein belongs to the TRAFAC class translation factor GTPase superfamily. Classic translation factor GTPase family. EF-Tu/EF-1A subfamily.

Its subcellular location is the cytoplasm. Functionally, this protein promotes the GTP-dependent binding of aminoacyl-tRNA to the A-site of ribosomes during protein biosynthesis. This is Elongation factor 1-alpha from Pisum sativum (Garden pea).